We begin with the raw amino-acid sequence, 385 residues long: MKFPSFLSLGIAASTTALAALPDQKPIGDTIADVHLGKFLIELAPGDTRWVTEEEKWGLKRDGRKFFDITAEVEQNLFPRAFAKTAVTFPTDLHRTVEVMPLAAQLSKDNMFSHLTTFTSFHTRYYKSETGIQSATWLMKQIQKTISSSPASNARVEKFEHPWGQFSIIATVPGQSNKTVVIGAHQDSINMFLPSILAAPGADDDGSGTVTILEAFRVLLQSEAIAQGNATNTVEFHWYSAEEGGLLGSQAVFSKYKQDNKDIRAMLQQDMTGYSKGTLDAGELESVGVITDFVDEGLTEFIKKVVNGYCDIPFVLTECGYACSDHASASRFGYPSAFVIESKFEHSSQHIHTGQDTIETLDFNHMLQHAKMTLGLAYELAFADI.

The signal sequence occupies residues 1 to 19 (MKFPSFLSLGIAASTTALA). The propeptide occupies 20–87 (ALPDQKPIGD…FPRAFAKTAV (68 aa)). Asn177 carries an N-linked (GlcNAc...) asparagine glycan. Residues His185 and Asp204 each contribute to the Zn(2+) site. Asn229 carries an N-linked (GlcNAc...) asparagine glycan. Zn(2+)-binding residues include Glu243 and Asp270. The cysteines at positions 319 and 323 are disulfide-linked. His352 is a Zn(2+) binding site.

This sequence belongs to the peptidase M28 family. M28E subfamily. Monomer. Requires Zn(2+) as cofactor.

The protein resides in the secreted. Its function is as follows. Extracellular aminopeptidase that allows assimilation of proteinaceous substrates. This Blastomyces gilchristii (strain SLH14081) (Blastomyces dermatitidis) protein is Leucine aminopeptidase 1 (LAP1).